The primary structure comprises 139 residues: Putative pre-16S rRNA nuclease (139 aa).

This sequence belongs to the YqgF nuclease family.

The protein resides in the cytoplasm. In terms of biological role, could be a nuclease involved in processing of the 5'-end of pre-16S rRNA. This chain is Putative pre-16S rRNA nuclease, found in Streptococcus equi subsp. zooepidemicus (strain H70).